The primary structure comprises 129 residues: Small ribosomal subunit protein uS11 (129 aa).

This sequence belongs to the universal ribosomal protein uS11 family. As to quaternary structure, part of the 30S ribosomal subunit. Interacts with proteins S7 and S18. Binds to IF-3.

Its function is as follows. Located on the platform of the 30S subunit, it bridges several disparate RNA helices of the 16S rRNA. Forms part of the Shine-Dalgarno cleft in the 70S ribosome. In Bradyrhizobium sp. (strain BTAi1 / ATCC BAA-1182), this protein is Small ribosomal subunit protein uS11.